The primary structure comprises 416 residues: L-cysteine:1D-myo-inositol 2-amino-2-deoxy-alpha-D-glucopyranoside ligase (416 aa).

A Zn(2+)-binding site is contributed by Cys-45. Residues 45-48 (CGIT), Thr-60, and 83-85 (NVT) each bind L-cysteinyl-5'-AMP. Residues 47–57 (ITPYDSTHLGH) carry the 'HIGH' region motif. The short motif at 191 to 196 (ERGGDP) is the 'ERGGDP' region element. Trp-232 contributes to the L-cysteinyl-5'-AMP binding site. Cys-236 serves as a coordination point for Zn(2+). 254–256 (GSD) serves as a coordination point for L-cysteinyl-5'-AMP. His-261 contacts Zn(2+). Val-286 lines the L-cysteinyl-5'-AMP pocket. Positions 292 to 296 (KMSKS) match the 'KMSKS' region motif.

Belongs to the class-I aminoacyl-tRNA synthetase family. MshC subfamily. As to quaternary structure, monomer. Requires Zn(2+) as cofactor.

The catalysed reaction is 1D-myo-inositol 2-amino-2-deoxy-alpha-D-glucopyranoside + L-cysteine + ATP = 1D-myo-inositol 2-(L-cysteinylamino)-2-deoxy-alpha-D-glucopyranoside + AMP + diphosphate + H(+). In terms of biological role, catalyzes the ATP-dependent condensation of GlcN-Ins and L-cysteine to form L-Cys-GlcN-Ins. The polypeptide is L-cysteine:1D-myo-inositol 2-amino-2-deoxy-alpha-D-glucopyranoside ligase (Brachybacterium faecium (strain ATCC 43885 / DSM 4810 / JCM 11609 / LMG 19847 / NBRC 14762 / NCIMB 9860 / 6-10)).